Reading from the N-terminus, the 152-residue chain is Large ribosomal subunit protein bL9 (152 aa).

It belongs to the bacterial ribosomal protein bL9 family.

Functionally, binds to the 23S rRNA. This Streptococcus thermophilus (strain ATCC BAA-491 / LMD-9) protein is Large ribosomal subunit protein bL9.